We begin with the raw amino-acid sequence, 182 residues long: ATP synthase subunit b 1 (182 aa).

The chain crosses the membrane as a helical span at residues 24–44; it reads FADPAFWVSIAFLMVVGFVYI.

It belongs to the ATPase B chain family. F-type ATPases have 2 components, F(1) - the catalytic core - and F(0) - the membrane proton channel. F(1) has five subunits: alpha(3), beta(3), gamma(1), delta(1), epsilon(1). F(0) has three main subunits: a(1), b(2) and c(10-14). The alpha and beta chains form an alternating ring which encloses part of the gamma chain. F(1) is attached to F(0) by a central stalk formed by the gamma and epsilon chains, while a peripheral stalk is formed by the delta and b chains.

It localises to the cell inner membrane. Its function is as follows. F(1)F(0) ATP synthase produces ATP from ADP in the presence of a proton or sodium gradient. F-type ATPases consist of two structural domains, F(1) containing the extramembraneous catalytic core and F(0) containing the membrane proton channel, linked together by a central stalk and a peripheral stalk. During catalysis, ATP synthesis in the catalytic domain of F(1) is coupled via a rotary mechanism of the central stalk subunits to proton translocation. Functionally, component of the F(0) channel, it forms part of the peripheral stalk, linking F(1) to F(0). In Rhodospirillum rubrum (strain ATCC 11170 / ATH 1.1.1 / DSM 467 / LMG 4362 / NCIMB 8255 / S1), this protein is ATP synthase subunit b 1.